Consider the following 179-residue polypeptide: Isopentenyl-diphosphate Delta-isomerase (179 aa).

Mn(2+) is bound by residues His-24 and His-30. The Nudix hydrolase domain maps to 28–160; the sequence is LLHRAFSIFI…PEKFTVWFLT (133 aa). The active site involves Cys-65. His-67 contributes to the Mn(2+) binding site. Mg(2+) is bound at residue Glu-85. Glu-110 and Glu-112 together coordinate Mn(2+). Glu-112 is a catalytic residue.

Belongs to the IPP isomerase type 1 family. As to quaternary structure, homodimer. Requires Mg(2+) as cofactor. It depends on Mn(2+) as a cofactor.

The protein resides in the cytoplasm. It carries out the reaction isopentenyl diphosphate = dimethylallyl diphosphate. It participates in isoprenoid biosynthesis; dimethylallyl diphosphate biosynthesis; dimethylallyl diphosphate from isopentenyl diphosphate: step 1/1. Catalyzes the 1,3-allylic rearrangement of the homoallylic substrate isopentenyl (IPP) to its highly electrophilic allylic isomer, dimethylallyl diphosphate (DMAPP). The sequence is that of Isopentenyl-diphosphate Delta-isomerase from Serratia proteamaculans (strain 568).